Consider the following 525-residue polypeptide: Cyclic AMP-responsive element-binding protein 3-like protein 2 (525 aa).

Residues 1 to 382 (MEIMESGDPV…SCKAAGTQTG (382 aa)) lie on the Cytoplasmic side of the membrane. Disordered regions lie at residues 85–104 (LCGD…DDNF), 203–267 (EALQ…QGSG), and 309–338 (NKIS…SSEN). Composition is skewed to polar residues over residues 90–102 (RPQS…SSDD) and 213–239 (SSHG…QSQA). Residues 299 to 362 (ALKKIRRKIK…RTLLQQLQRL (64 aa)) form the bZIP domain. A basic motif region spans residues 301 to 330 (KKIRRKIKNKISAQESRRKKKEYMDSLEKR). The segment covering 322 to 332 (EYMDSLEKRVE) has biased composition (basic and acidic residues). The tract at residues 341–362 (LRKKVEVLESTNRTLLQQLQRL) is leucine-zipper. Residues 383–403 (TCLMMVVLCFAVIFGSFTQNL) form a helical; Signal-anchor for type II membrane protein membrane-spanning segment. The Lumenal portion of the chain corresponds to 404 to 525 (DMYSSSSKTI…ELDRTVNTTS (122 aa)). The short motif at 433–436 (RKLL) is the S1P recognition element. Asn-490, Asn-509, and Asn-522 each carry an N-linked (GlcNAc...) asparagine glycan.

The protein belongs to the bZIP family. ATF subfamily. As to quaternary structure, binds DNA as a dimer. In terms of processing, upon ER stress, translocated to the Golgi apparatus, where it is processed by regulated intramembrane proteolysis (RIP) to release the cytosol-facing N-terminal transcription factor domain. The cleavage is performed sequentially by site-1 and site-2 proteases (S1P/mbtps1 and S2P/mbtps2).

It is found in the endoplasmic reticulum membrane. It localises to the nucleus. Transcription factor involved in unfolded protein response (UPR). In the absence of endoplasmic reticulum (ER) stress, inserted into ER membranes, with N-terminal DNA-binding and transcription activation domains oriented toward the cytosolic face of the membrane. In response to ER stress, transported to the Golgi, where it is cleaved in a site-specific manner by resident proteases S1P/mbtps1 and S2P/mbtps2. The released N-terminal cytosolic domain is translocated to the nucleus to effect transcription of specific target genes. Plays a critical role in chondrogenesis. May protect neuroblastoma cells from ER stress-induced death. In vitro activates transcription of target genes via direct binding to the CRE site. This chain is Cyclic AMP-responsive element-binding protein 3-like protein 2 (creb3l2), found in Xenopus laevis (African clawed frog).